The primary structure comprises 878 residues: AP-2 complex subunit alpha (878 aa).

This sequence belongs to the adaptor complexes large subunit family. In terms of assembly, adaptor protein complex 2 (AP-2) is a heterotetramer composed of two large adaptins (alpha-type subunit apl3 and beta-type subunit apl1), a medium chain (mu-type subunit apm4) and a small adaptin (sigma-type subunit aps2).

It is found in the cell membrane. Its subcellular location is the membrane. The protein localises to the coated pit. Functionally, adaptins are components of the adaptor complexes which link clathrin to receptors in coated vesicles. Clathrin-associated protein complexes are believed to interact with the cytoplasmic tails of membrane proteins, leading to their selection and concentration. Alpha adaptin is a subunit of the plasma membrane adaptor. This Schizosaccharomyces pombe (strain 972 / ATCC 24843) (Fission yeast) protein is AP-2 complex subunit alpha (apl3).